Consider the following 283-residue polypeptide: Putative pyruvate, phosphate dikinase regulatory protein (283 aa).

156–163 (GLSRAGKT) contacts ADP.

It belongs to the pyruvate, phosphate/water dikinase regulatory protein family. PDRP subfamily.

The enzyme catalyses N(tele)-phospho-L-histidyl/L-threonyl-[pyruvate, phosphate dikinase] + ADP = N(tele)-phospho-L-histidyl/O-phospho-L-threonyl-[pyruvate, phosphate dikinase] + AMP + H(+). The catalysed reaction is N(tele)-phospho-L-histidyl/O-phospho-L-threonyl-[pyruvate, phosphate dikinase] + phosphate + H(+) = N(tele)-phospho-L-histidyl/L-threonyl-[pyruvate, phosphate dikinase] + diphosphate. Functionally, bifunctional serine/threonine kinase and phosphorylase involved in the regulation of the pyruvate, phosphate dikinase (PPDK) by catalyzing its phosphorylation/dephosphorylation. In Desulfotalea psychrophila (strain LSv54 / DSM 12343), this protein is Putative pyruvate, phosphate dikinase regulatory protein.